A 161-amino-acid polypeptide reads, in one-letter code: Early E3 17.7 kDa glycoprotein (161 aa).

2 N-linked (GlcNAc...) asparagine; by host glycosylation sites follow: N14 and N87. Residues 102–129 (IINPAIFLFLHVLTLVIVLAMAAEVIYN) traverse the membrane as a helical segment.

The protein localises to the host membrane. The sequence is that of Early E3 17.7 kDa glycoprotein from Murine adenovirus A serotype 1 (MAdV-1).